The primary structure comprises 173 residues: Transcription factor S-II-related protein (173 aa).

Residues Ile9 to Val129 enclose the TFIIS central domain. The TFIIS-type zinc-finger motif lies at Glu130–Lys170. Zn(2+)-binding residues include Cys134, Cys137, Cys162, and Cys165.

The protein belongs to the TFS-II family.

The polypeptide is Transcription factor S-II-related protein (Acanthamoeba polyphaga mimivirus (APMV)).